Here is a 556-residue protein sequence, read N- to C-terminus: Glutamine--tRNA ligase (556 aa).

The short motif at 35–45 (PEPNGYLHIGH) is the 'HIGH' region element. ATP-binding positions include 36-38 (EPN) and 42-48 (HIGHAKS). The L-glutamine site is built by Asp-68 and Tyr-213. ATP is bound by residues Thr-232 and 262 to 263 (RL). A 'KMSKS' region motif is present at residues 269 to 273 (VTSKR).

This sequence belongs to the class-I aminoacyl-tRNA synthetase family. Monomer.

The protein localises to the cytoplasm. It carries out the reaction tRNA(Gln) + L-glutamine + ATP = L-glutaminyl-tRNA(Gln) + AMP + diphosphate. The polypeptide is Glutamine--tRNA ligase (Pseudomonas aeruginosa (strain ATCC 15692 / DSM 22644 / CIP 104116 / JCM 14847 / LMG 12228 / 1C / PRS 101 / PAO1)).